Consider the following 147-residue polypeptide: Sec-independent protein translocase protein TatB (147 aa).

The chain crosses the membrane as a helical span at residues 1 to 21 (MFDVSFTELMVIGVIALVVIG). The disordered stretch occupies residues 67–147 (DETARSMQTS…DKTPPTGSAT (81 aa)). Basic and acidic residues predominate over residues 93–103 (AELDDTARDAS). 2 stretches are compositionally biased toward low complexity: residues 109 to 120 (ADAPAEPAPAVA) and 129 to 147 (APPA…GSAT).

The protein belongs to the TatB family. In terms of assembly, the Tat system comprises two distinct complexes: a TatABC complex, containing multiple copies of TatA, TatB and TatC subunits, and a separate TatA complex, containing only TatA subunits. Substrates initially bind to the TatABC complex, which probably triggers association of the separate TatA complex to form the active translocon.

The protein localises to the cell inner membrane. In terms of biological role, part of the twin-arginine translocation (Tat) system that transports large folded proteins containing a characteristic twin-arginine motif in their signal peptide across membranes. Together with TatC, TatB is part of a receptor directly interacting with Tat signal peptides. TatB may form an oligomeric binding site that transiently accommodates folded Tat precursor proteins before their translocation. This is Sec-independent protein translocase protein TatB from Bordetella pertussis (strain Tohama I / ATCC BAA-589 / NCTC 13251).